Here is a 403-residue protein sequence, read N- to C-terminus: S-adenosylmethionine synthase (403 aa).

Position 17 (His17) interacts with ATP. Asp19 serves as a coordination point for Mg(2+). Residue Glu45 participates in K(+) binding. L-methionine is bound by residues Glu58 and Gln104. The tract at residues 104-114 (QSSDIAQGVNT) is flexible loop. ATP-binding positions include 179-181 (DGK), 250-251 (KF), Asp259, 265-266 (RK), Ala282, and Lys286. Residue Asp259 coordinates L-methionine. Lys290 serves as a coordination point for L-methionine.

It belongs to the AdoMet synthase family. In terms of assembly, homotetramer; dimer of dimers. Mg(2+) serves as cofactor. It depends on K(+) as a cofactor.

It is found in the cytoplasm. It carries out the reaction L-methionine + ATP + H2O = S-adenosyl-L-methionine + phosphate + diphosphate. The protein operates within amino-acid biosynthesis; S-adenosyl-L-methionine biosynthesis; S-adenosyl-L-methionine from L-methionine: step 1/1. Functionally, catalyzes the formation of S-adenosylmethionine (AdoMet) from methionine and ATP. The overall synthetic reaction is composed of two sequential steps, AdoMet formation and the subsequent tripolyphosphate hydrolysis which occurs prior to release of AdoMet from the enzyme. The polypeptide is S-adenosylmethionine synthase (Mycobacterium leprae (strain Br4923)).